Reading from the N-terminus, the 136-residue chain is Large-conductance mechanosensitive channel (136 aa).

Transmembrane regions (helical) follow at residues 10 to 30 (FAMR…AAFG) and 76 to 96 (GVFI…FMAI).

It belongs to the MscL family. As to quaternary structure, homopentamer.

The protein resides in the cell inner membrane. Channel that opens in response to stretch forces in the membrane lipid bilayer. May participate in the regulation of osmotic pressure changes within the cell. This chain is Large-conductance mechanosensitive channel, found in Escherichia coli O127:H6 (strain E2348/69 / EPEC).